A 117-amino-acid chain; its full sequence is Large ribosomal subunit protein bL20 (117 aa).

The protein belongs to the bacterial ribosomal protein bL20 family.

In terms of biological role, binds directly to 23S ribosomal RNA and is necessary for the in vitro assembly process of the 50S ribosomal subunit. It is not involved in the protein synthesizing functions of that subunit. The protein is Large ribosomal subunit protein bL20 of Glaesserella parasuis serovar 5 (strain SH0165) (Haemophilus parasuis).